The sequence spans 396 residues: 1-deoxy-D-xylulose 5-phosphate reductoisomerase (396 aa).

Threonine 13, glycine 14, serine 15, isoleucine 16, and asparagine 127 together coordinate NADPH. 1-deoxy-D-xylulose 5-phosphate is bound at residue lysine 128. Glutamate 129 contributes to the NADPH binding site. Residue aspartate 153 participates in Mn(2+) binding. Residues serine 154, glutamate 155, serine 184, and histidine 207 each contribute to the 1-deoxy-D-xylulose 5-phosphate site. Glutamate 155 provides a ligand contact to Mn(2+). Glycine 213 contributes to the NADPH binding site. The 1-deoxy-D-xylulose 5-phosphate site is built by serine 220, asparagine 225, lysine 226, and glutamate 229. Glutamate 229 serves as a coordination point for Mn(2+).

This sequence belongs to the DXR family. It depends on Mg(2+) as a cofactor. The cofactor is Mn(2+).

The enzyme catalyses 2-C-methyl-D-erythritol 4-phosphate + NADP(+) = 1-deoxy-D-xylulose 5-phosphate + NADPH + H(+). Its pathway is isoprenoid biosynthesis; isopentenyl diphosphate biosynthesis via DXP pathway; isopentenyl diphosphate from 1-deoxy-D-xylulose 5-phosphate: step 1/6. Catalyzes the NADPH-dependent rearrangement and reduction of 1-deoxy-D-xylulose-5-phosphate (DXP) to 2-C-methyl-D-erythritol 4-phosphate (MEP). The chain is 1-deoxy-D-xylulose 5-phosphate reductoisomerase from Pseudomonas fluorescens (strain ATCC BAA-477 / NRRL B-23932 / Pf-5).